Reading from the N-terminus, the 158-residue chain is Large ribosomal subunit protein uL11 (158 aa).

It belongs to the universal ribosomal protein uL11 family. Part of the ribosomal stalk of the 50S ribosomal subunit. Interacts with L10 and the large rRNA to form the base of the stalk. L10 forms an elongated spine to which L12 dimers bind in a sequential fashion forming a multimeric L10(L12)X complex.

Its function is as follows. Forms part of the ribosomal stalk which helps the ribosome interact with GTP-bound translation factors. The polypeptide is Large ribosomal subunit protein uL11 (Methanosphaerula palustris (strain ATCC BAA-1556 / DSM 19958 / E1-9c)).